The primary structure comprises 282 residues: 4-hydroxybenzoate octaprenyltransferase (282 aa).

The next 9 helical transmembrane spans lie at 17–37 (IGIL…NQGF), 40–60 (IDLL…GCVI), 90–110 (AFIL…KLPI), 113–133 (FYFA…KRFL), 135–155 (APQL…FIAS), 163–183 (FIVL…MYAM), 207–227 (LIIA…AINK), 231–251 (WFFY…LKLI), and 262–282 (AFLV…LALI).

This sequence belongs to the UbiA prenyltransferase family. The cofactor is Mg(2+).

It is found in the cell inner membrane. It carries out the reaction all-trans-octaprenyl diphosphate + 4-hydroxybenzoate = 4-hydroxy-3-(all-trans-octaprenyl)benzoate + diphosphate. It participates in cofactor biosynthesis; ubiquinone biosynthesis. In terms of biological role, catalyzes the prenylation of para-hydroxybenzoate (PHB) with an all-trans polyprenyl group. Mediates the second step in the final reaction sequence of ubiquinone-8 (UQ-8) biosynthesis, which is the condensation of the polyisoprenoid side chain with PHB, generating the first membrane-bound Q intermediate 3-octaprenyl-4-hydroxybenzoate. The chain is 4-hydroxybenzoate octaprenyltransferase from Legionella pneumophila (strain Corby).